The chain runs to 317 residues: Ribose-phosphate pyrophosphokinase (317 aa).

ATP-binding positions include 43-45 and 102-103; these read DGE and RQ. Mg(2+)-binding residues include His-136 and Asp-175. The active site involves Lys-198. D-ribose 5-phosphate-binding positions include Arg-200, Asp-224, and 228-232; that span reads DTAGT.

It belongs to the ribose-phosphate pyrophosphokinase family. Class I subfamily. Homohexamer. Mg(2+) serves as cofactor.

It is found in the cytoplasm. The catalysed reaction is D-ribose 5-phosphate + ATP = 5-phospho-alpha-D-ribose 1-diphosphate + AMP + H(+). It functions in the pathway metabolic intermediate biosynthesis; 5-phospho-alpha-D-ribose 1-diphosphate biosynthesis; 5-phospho-alpha-D-ribose 1-diphosphate from D-ribose 5-phosphate (route I): step 1/1. Its function is as follows. Involved in the biosynthesis of the central metabolite phospho-alpha-D-ribosyl-1-pyrophosphate (PRPP) via the transfer of pyrophosphoryl group from ATP to 1-hydroxyl of ribose-5-phosphate (Rib-5-P). The chain is Ribose-phosphate pyrophosphokinase from Bacillus anthracis.